We begin with the raw amino-acid sequence, 214 residues long: Ribonuclease HII (214 aa).

Residues 26-214 (EIVCGVDEAG…PVRAALDLIR (189 aa)) form the RNase H type-2 domain. A divalent metal cation-binding residues include Asp32, Glu33, and Asp124.

The protein belongs to the RNase HII family. It depends on Mn(2+) as a cofactor. Mg(2+) is required as a cofactor.

The protein localises to the cytoplasm. It catalyses the reaction Endonucleolytic cleavage to 5'-phosphomonoester.. Endonuclease that specifically degrades the RNA of RNA-DNA hybrids. The sequence is that of Ribonuclease HII from Burkholderia lata (strain ATCC 17760 / DSM 23089 / LMG 22485 / NCIMB 9086 / R18194 / 383).